The chain runs to 264 residues: Thymidylate synthase (264 aa).

Arg21 is a binding site for dUMP. His51 contacts (6R)-5,10-methylene-5,6,7,8-tetrahydrofolate. Residue 126–127 (RR) coordinates dUMP. The active-site Nucleophile is Cys146. Residues 166-169 (RSAD), Asn177, and 207-209 (HLY) each bind dUMP. Asp169 contributes to the (6R)-5,10-methylene-5,6,7,8-tetrahydrofolate binding site. (6R)-5,10-methylene-5,6,7,8-tetrahydrofolate is bound at residue Ala263.

Belongs to the thymidylate synthase family. Bacterial-type ThyA subfamily. In terms of assembly, homodimer.

It localises to the cytoplasm. It catalyses the reaction dUMP + (6R)-5,10-methylene-5,6,7,8-tetrahydrofolate = 7,8-dihydrofolate + dTMP. It functions in the pathway pyrimidine metabolism; dTTP biosynthesis. Catalyzes the reductive methylation of 2'-deoxyuridine-5'-monophosphate (dUMP) to 2'-deoxythymidine-5'-monophosphate (dTMP) while utilizing 5,10-methylenetetrahydrofolate (mTHF) as the methyl donor and reductant in the reaction, yielding dihydrofolate (DHF) as a by-product. This enzymatic reaction provides an intracellular de novo source of dTMP, an essential precursor for DNA biosynthesis. In Thiobacillus denitrificans (strain ATCC 25259 / T1), this protein is Thymidylate synthase.